The following is a 316-amino-acid chain: Methionyl-tRNA formyltransferase (316 aa).

109-112 contacts (6S)-5,6,7,8-tetrahydrofolate; that stretch reads SLLP.

The protein belongs to the Fmt family.

The enzyme catalyses L-methionyl-tRNA(fMet) + (6R)-10-formyltetrahydrofolate = N-formyl-L-methionyl-tRNA(fMet) + (6S)-5,6,7,8-tetrahydrofolate + H(+). In terms of biological role, attaches a formyl group to the free amino group of methionyl-tRNA(fMet). The formyl group appears to play a dual role in the initiator identity of N-formylmethionyl-tRNA by promoting its recognition by IF2 and preventing the misappropriation of this tRNA by the elongation apparatus. The sequence is that of Methionyl-tRNA formyltransferase from Nitrosomonas eutropha (strain DSM 101675 / C91 / Nm57).